Reading from the N-terminus, the 116-residue chain is Ribonuclease P protein component (116 aa).

It belongs to the RnpA family. In terms of assembly, consists of a catalytic RNA component (M1 or rnpB) and a protein subunit.

The catalysed reaction is Endonucleolytic cleavage of RNA, removing 5'-extranucleotides from tRNA precursor.. RNaseP catalyzes the removal of the 5'-leader sequence from pre-tRNA to produce the mature 5'-terminus. It can also cleave other RNA substrates such as 4.5S RNA. The protein component plays an auxiliary but essential role in vivo by binding to the 5'-leader sequence and broadening the substrate specificity of the ribozyme. In Bacillus velezensis (strain DSM 23117 / BGSC 10A6 / LMG 26770 / FZB42) (Bacillus amyloliquefaciens subsp. plantarum), this protein is Ribonuclease P protein component.